The chain runs to 178 residues: Protein PilI (178 aa).

One can recognise a CheW-like domain in the interval Ser34–Phe173.

In terms of biological role, may be a part of a signal-transduction system that regulates twitching motility by controlling pilus function (extension and retraction). In Pseudomonas aeruginosa (strain ATCC 15692 / DSM 22644 / CIP 104116 / JCM 14847 / LMG 12228 / 1C / PRS 101 / PAO1), this protein is Protein PilI (pilI).